Reading from the N-terminus, the 390-residue chain is Pyruvate dehydrogenase E1 component subunit alpha, somatic form, mitochondrial (390 aa).

The transit peptide at 1 to 29 directs the protein to the mitochondrion; it reads MRKMLAAVSRVLSGASQKPASRVLVASRN. Residue Lys63 is modified to N6-acetyllysine; alternate. N6-succinyllysine; alternate is present on Lys63. Pyruvate-binding residues include His92, Tyr118, Arg119, Ala157, Gly165, Val167, Asp196, Gly197, Ala198, Asn225, and Tyr227. The thiamine diphosphate site is built by Tyr118 and Arg119. Residues Gly165, Val167, Asp196, Gly197, Ala198, and Asn225 each contribute to the thiamine diphosphate site. Asp196 provides a ligand contact to Mg(2+). Mg(2+) is bound by residues Asn225 and Tyr227. The residue at position 232 (Ser232) is a Phosphoserine; by PDK1. Lys244 carries the N6-acetyllysine; alternate modification. Lys244 carries the N6-succinyllysine; alternate modification. An N6-succinyllysine modification is found at Lys277. His292 lines the thiamine diphosphate pocket. The residue at position 293 (Ser293) is a Phosphoserine; by PDK1, PDK2, PDK3 and PDK4. Ser295 is subject to Phosphoserine. Ser300 carries the post-translational modification Phosphoserine; by PDK1, PDK2, PDK3 and PDK4. Tyr301 carries the phosphotyrosine modification. Lys313 is subject to N6-acetyllysine; alternate. Lys313 is subject to N6-succinyllysine; alternate. 2 positions are modified to N6-acetyllysine: Lys321 and Lys336. Position 385 is an N6-succinyllysine (Lys385).

In terms of assembly, heterotetramer of two PDHA1 and two PDHB subunits. The heterotetramer interacts with DLAT, and is part of the multimeric pyruvate dehydrogenase complex that contains multiple copies of pyruvate dehydrogenase (E1), dihydrolipoamide acetyltransferase (DLAT, E2) and lipoamide dehydrogenase (DLD, E3). These subunits are bound to an inner core composed of about 48 DLAT and 12 PDHX molecules. Requires thiamine diphosphate as cofactor. Mg(2+) is required as a cofactor. Post-translationally, phosphorylation at Ser-232, Ser-293 and Ser-300 by PDK family kinases inactivates the enzyme; for this phosphorylation at a single site is sufficient. Phosphorylation at Ser-293 interferes with access to active site, and thereby inactivates the enzyme. Dephosphorylation at all three sites, i.e. at Ser-232, Ser-293 and Ser-300, is required for reactivation. In terms of processing, acetylation alters the phosphorylation pattern. Deacetylated by SIRT3.

The protein localises to the mitochondrion matrix. The catalysed reaction is N(6)-[(R)-lipoyl]-L-lysyl-[protein] + pyruvate + H(+) = N(6)-[(R)-S(8)-acetyldihydrolipoyl]-L-lysyl-[protein] + CO2. Its activity is regulated as follows. Pyruvate dehydrogenase activity is inhibited by phosphorylation of PDHA1; it is reactivated by dephosphorylation. Functionally, the pyruvate dehydrogenase complex catalyzes the overall conversion of pyruvate to acetyl-CoA and CO(2), and thereby links the glycolytic pathway to the tricarboxylic cycle. In Pan troglodytes (Chimpanzee), this protein is Pyruvate dehydrogenase E1 component subunit alpha, somatic form, mitochondrial (PDHA1).